A 120-amino-acid polypeptide reads, in one-letter code: Succinate dehydrogenase membrane anchor subunit (120 aa).

At 1-17 (MTEKLLHFIRTKSGSMH) the chain is on the mitochondrial matrix side. The chain crosses the membrane as a helical span at residues 18–38 (WWLQRFLAILLAPIILYLLFD). The Mitochondrial intermembrane portion of the chain corresponds to 39–63 (VAIYIGQQSDPTVMMFLNRIFNHNS). The chain crosses the membrane as a helical span at residues 64–85 (IFIFITSVILIWHVRGGMEVII). A heme-binding site is contributed by His-76. Over 86–95 (EDYVHGEKTR) the chain is Mitochondrial matrix. Tyr-88 is an a ubiquinone binding site. Residues 96–120 (IVSIFLIRVIAIEIMEYLYKCSIIF) form a helical membrane-spanning segment.

As to quaternary structure, part of an enzyme complex containing four subunits: a flavoprotein, an iron-sulfur protein, plus two membrane-anchoring proteins. Heme is required as a cofactor.

It is found in the mitochondrion inner membrane. It functions in the pathway carbohydrate metabolism; tricarboxylic acid cycle. Its function is as follows. Membrane-anchoring subunit of succinate dehydrogenase (SDH). The protein is Succinate dehydrogenase membrane anchor subunit (SDH4) of Reclinomonas americana.